A 371-amino-acid polypeptide reads, in one-letter code: MKFPRKGIPQEEVMRELEKYTSKDLSFSSGKILGSMCTLPHELAKEVFCMYMDRNLGDPGLHPGTKKIEEEVIEMLSDLLHLERGYGHIVSGGTEANILAVRAFRNLADVENPELILPKSAHFSFIKAGEMLGVKLIWADLNPDYTVDVKDVEAKISENTIGIVGIAGTTGLGVVDDIPALSDLARDYGIPLHVDAAFGGFVIPFAKELGYDLPDFDFKLKGVQSITIDPHKMGMAPIPAGGIVFRHKKYLRAISVLAPYLAGGKIWQATITGTRPGASVLAVWALIKHLGFEGYMEIVDRAMKLSRWFAEEIKKTPGAWLVREPMLNIVSFKTKNLRRVERELKSRGWGISAHRGYIRIVSHASCDGGHD.

K232 is subject to N6-(pyridoxal phosphate)lysine.

Belongs to the group II decarboxylase family. MfnA subfamily. The cofactor is pyridoxal 5'-phosphate.

It carries out the reaction L-aspartate + H(+) = beta-alanine + CO2. Its pathway is cofactor biosynthesis; coenzyme A biosynthesis. Its function is as follows. Catalyzes the decarboxylation of L-aspartate to produce beta-alanine. The sequence is that of Probable L-aspartate decarboxylase from Pyrococcus furiosus (strain ATCC 43587 / DSM 3638 / JCM 8422 / Vc1).